A 123-amino-acid chain; its full sequence is Large ribosomal subunit protein bL21 (123 aa).

This sequence belongs to the bacterial ribosomal protein bL21 family. In terms of assembly, part of the 50S ribosomal subunit. Contacts protein L20.

This protein binds to 23S rRNA in the presence of protein L20. The sequence is that of Large ribosomal subunit protein bL21 from Sinorhizobium fredii (strain NBRC 101917 / NGR234).